The sequence spans 448 residues: Methylenetetrahydrofolate--tRNA-(uracil-5-)-methyltransferase TrmFO (448 aa).

13–18 (GAGLAG) lines the FAD pocket.

This sequence belongs to the MnmG family. TrmFO subfamily. It depends on FAD as a cofactor.

The protein resides in the cytoplasm. The catalysed reaction is uridine(54) in tRNA + (6R)-5,10-methylene-5,6,7,8-tetrahydrofolate + NADH + H(+) = 5-methyluridine(54) in tRNA + (6S)-5,6,7,8-tetrahydrofolate + NAD(+). It carries out the reaction uridine(54) in tRNA + (6R)-5,10-methylene-5,6,7,8-tetrahydrofolate + NADPH + H(+) = 5-methyluridine(54) in tRNA + (6S)-5,6,7,8-tetrahydrofolate + NADP(+). In terms of biological role, catalyzes the folate-dependent formation of 5-methyl-uridine at position 54 (M-5-U54) in all tRNAs. This Streptococcus pyogenes serotype M28 (strain MGAS6180) protein is Methylenetetrahydrofolate--tRNA-(uracil-5-)-methyltransferase TrmFO.